The chain runs to 257 residues: UPF0246 protein HAPS_0280 (257 aa).

It belongs to the UPF0246 family.

In Glaesserella parasuis serovar 5 (strain SH0165) (Haemophilus parasuis), this protein is UPF0246 protein HAPS_0280.